Here is a 145-residue protein sequence, read N- to C-terminus: Large ribosomal subunit protein uL13 (145 aa).

The protein belongs to the universal ribosomal protein uL13 family. In terms of assembly, part of the 50S ribosomal subunit.

In terms of biological role, this protein is one of the early assembly proteins of the 50S ribosomal subunit, although it is not seen to bind rRNA by itself. It is important during the early stages of 50S assembly. This is Large ribosomal subunit protein uL13 from Exiguobacterium sibiricum (strain DSM 17290 / CCUG 55495 / CIP 109462 / JCM 13490 / 255-15).